The chain runs to 77 residues: U8-lycotoxin-Ls1r (77 aa).

A signal peptide spans 1–20 (MKLIIFTGLVLFAIVSLIEA). Positions 21 to 26 (QAENEK) are excised as a propeptide.

This sequence belongs to the neurotoxin 19 (CSTX) family. 08 (U8-Lctx) subfamily. Contains 4 disulfide bonds. As to expression, expressed by the venom gland.

It is found in the secreted. This chain is U8-lycotoxin-Ls1r, found in Lycosa singoriensis (Wolf spider).